Consider the following 210-residue polypeptide: Homeobox protein Rhox5 (210 aa).

The segment at 29 to 117 (KAEAFLQAGE…KNGKPEDRQM (89 aa)) is disordered. The segment at residues 117–175 (MPLQGSRFAQQRLSELQSILQRTNSFDVPREDLYRLMDTCVARVQNWFKIRRAAARRNR) is a DNA-binding region (homeobox; atypical).

It localises to the nucleus. Transcription factor required for differentiation of embryonic stem cells (ESCs) into primordial germ cells. This is Homeobox protein Rhox5 (Rhox5) from Mus minutoides (Southern African pygmy mouse).